The primary structure comprises 578 residues: Proline--tRNA ligase (578 aa).

It belongs to the class-II aminoacyl-tRNA synthetase family. ProS type 1 subfamily. Homodimer.

The protein localises to the cytoplasm. It catalyses the reaction tRNA(Pro) + L-proline + ATP = L-prolyl-tRNA(Pro) + AMP + diphosphate. Its function is as follows. Catalyzes the attachment of proline to tRNA(Pro) in a two-step reaction: proline is first activated by ATP to form Pro-AMP and then transferred to the acceptor end of tRNA(Pro). As ProRS can inadvertently accommodate and process non-cognate amino acids such as alanine and cysteine, to avoid such errors it has two additional distinct editing activities against alanine. One activity is designated as 'pretransfer' editing and involves the tRNA(Pro)-independent hydrolysis of activated Ala-AMP. The other activity is designated 'posttransfer' editing and involves deacylation of mischarged Ala-tRNA(Pro). The misacylated Cys-tRNA(Pro) is not edited by ProRS. The chain is Proline--tRNA ligase from Burkholderia pseudomallei (strain 668).